Consider the following 75-residue polypeptide: Serine rich endogenous peptide 4 (75 aa).

Positions 1 to 31 are cleaved as a signal peptide; it reads MATKTSNLGHLLLSLFILLLFILSQVGVAQA. The interval 51–75 is disordered; sequence PPPLRGIVKPPIASFHSASPKDKGP. The short motif at 61-75 is the SCOOP motif element; that stretch reads PIASFHSASPKDKGP. The SxS motif essential for MIK2 binding signature appears at 67-69; sequence SAS.

Belongs to the serine rich endogenous peptide (SCOOP) phytocytokine family. As to quaternary structure, interacts with MIK2 (via extracellular leucine-rich repeat domain); this interaction triggers the formation of complex between MIK2 and the BAK1/SERK3 and SERK4 coreceptors, and subsequent BAK1 activation by phosphorylation. In terms of tissue distribution, mostly expressed in leaves and seedlings shoots, and, to a lower extent, in roots, stems, siliques, seeds and flowers.

The protein localises to the cell membrane. It localises to the secreted. Its subcellular location is the extracellular space. The protein resides in the apoplast. Functionally, brassicaceae-specific phytocytokine (plant endogenous peptide released into the apoplast) perceived by MIK2 in a BAK1/SERK3 and SERK4 coreceptors-dependent manner, that modulates various physiological and antimicrobial processes including growth prevention and reactive oxygen species (ROS) response regulation. Inhibits root growth. Prevents general growth and development. Exhibits antibacterial effects against Pseudomonas syringae pv. tomato DC3000, Ralstonia solanacearum, Bacillus subtilis and Agrobacterium tumefaciens, thus being an antimicrobial peptide (AMP). In Arabidopsis thaliana (Mouse-ear cress), this protein is Serine rich endogenous peptide 4.